An 820-amino-acid polypeptide reads, in one-letter code: Pentatricopeptide repeat-containing protein At3g22150, chloroplastic (820 aa).

The interval 1 to 42 (MAGSALPLPPPPPLSLQSPSQNQTRHSSTFSPPTLTPQTPSI) is disordered. Residues 1–50 (MAGSALPLPPPPPLSLQSPSQNQTRHSSTFSPPTLTPQTPSIRSRLSKIC) constitute a chloroplast transit peptide. Over residues 22 to 42 (NQTRHSSTFSPPTLTPQTPSI) the composition is skewed to polar residues. PPR repeat units follow at residues 69-99 (TTVL…MKKT), 106-136 (DAYT…LIRC), 141-177 (SRVV…MRRK), 178-212 (NVVA…EVKP), 213-247 (SPVS…GDEY), 250-284 (DLFV…NIEV), 285-316 (WNTM…EIVS), 317-347 (DEVT…VSKN), 352-382 (PIVI…MRER), 383-417 (DVVS…GFKI), 418-452 (DYIT…GIQF), 485-519 (DQAT…NIRP), 520-550 (NAVT…SIRQ), 555-585 (NVFV…TKER), 586-620 (NSVT…GIKP), 621-651 (DAIT…MREV), and 657-691 (SSEH…GNIA). The interval 693-770 (LWGSLLGSCK…EVGRSGIEIA (78 aa)) is type E motif. A type E(+) motif region spans residues 771–801 (GYVNCFVSRDQEHPHSSEIYDVIDGLAKDMR).

The protein belongs to the PPR family. PCMP-E subfamily.

It is found in the plastid. It localises to the chloroplast. This Arabidopsis thaliana (Mouse-ear cress) protein is Pentatricopeptide repeat-containing protein At3g22150, chloroplastic (PCMP-E95).